Here is a 129-residue protein sequence, read N- to C-terminus: Small ribosomal subunit protein uS11 (129 aa).

It belongs to the universal ribosomal protein uS11 family. Part of the 30S ribosomal subunit. Interacts with proteins S7 and S18. Binds to IF-3.

In terms of biological role, located on the platform of the 30S subunit, it bridges several disparate RNA helices of the 16S rRNA. Forms part of the Shine-Dalgarno cleft in the 70S ribosome. The sequence is that of Small ribosomal subunit protein uS11 from Haemophilus influenzae (strain 86-028NP).